The primary structure comprises 362 residues: Probable protein phosphatase 2C 11 (362 aa).

Positions 23–329 (KLGLSSMQGW…DNMTMVLVQF (307 aa)) constitute a PPM-type phosphatase domain. Positions 57, 58, 272, and 320 each coordinate Mn(2+).

This sequence belongs to the PP2C family. Mg(2+) is required as a cofactor. Mn(2+) serves as cofactor.

The catalysed reaction is O-phospho-L-seryl-[protein] + H2O = L-seryl-[protein] + phosphate. It catalyses the reaction O-phospho-L-threonyl-[protein] + H2O = L-threonyl-[protein] + phosphate. The sequence is that of Probable protein phosphatase 2C 11 from Oryza sativa subsp. japonica (Rice).